Reading from the N-terminus, the 482-residue chain is Bifunctional protein GlmU (482 aa).

The tract at residues 1–238 is pyrophosphorylase; it reads MSAIRPAAVV…HREIAGINNR (238 aa). Residues 12 to 15, lysine 26, glutamine 79, and 84 to 85 contribute to the UDP-N-acetyl-alpha-D-glucosamine site; these read LAAG and GT. Aspartate 110 lines the Mg(2+) pocket. UDP-N-acetyl-alpha-D-glucosamine contacts are provided by glycine 147, glutamate 163, asparagine 178, and asparagine 236. Asparagine 236 serves as a coordination point for Mg(2+). The tract at residues 239–259 is linker; sequence VQLAEARRILNDRLLTGAMLA. The interval 260-482 is N-acetyltransferase; sequence GVTVVDPATT…AVSREADGED (223 aa). The UDP-N-acetyl-alpha-D-glucosamine site is built by arginine 341 and lysine 359. Residue histidine 371 is the Proton acceptor of the active site. UDP-N-acetyl-alpha-D-glucosamine-binding residues include tyrosine 374 and asparagine 385. Residues alanine 388, 394–395, serine 413, alanine 431, and arginine 448 contribute to the acetyl-CoA site; that span reads NY. The segment at 460 to 482 is disordered; it reads RKRPGSAAAKAAEAVSREADGED. The span at 464–473 shows a compositional bias: low complexity; it reads GSAAAKAAEA.

This sequence in the N-terminal section; belongs to the N-acetylglucosamine-1-phosphate uridyltransferase family. The protein in the C-terminal section; belongs to the transferase hexapeptide repeat family. Homotrimer. The cofactor is Mg(2+).

Its subcellular location is the cytoplasm. The catalysed reaction is alpha-D-glucosamine 1-phosphate + acetyl-CoA = N-acetyl-alpha-D-glucosamine 1-phosphate + CoA + H(+). It catalyses the reaction N-acetyl-alpha-D-glucosamine 1-phosphate + UTP + H(+) = UDP-N-acetyl-alpha-D-glucosamine + diphosphate. It functions in the pathway nucleotide-sugar biosynthesis; UDP-N-acetyl-alpha-D-glucosamine biosynthesis; N-acetyl-alpha-D-glucosamine 1-phosphate from alpha-D-glucosamine 6-phosphate (route II): step 2/2. Its pathway is nucleotide-sugar biosynthesis; UDP-N-acetyl-alpha-D-glucosamine biosynthesis; UDP-N-acetyl-alpha-D-glucosamine from N-acetyl-alpha-D-glucosamine 1-phosphate: step 1/1. The protein operates within bacterial outer membrane biogenesis; LPS lipid A biosynthesis. Its function is as follows. Catalyzes the last two sequential reactions in the de novo biosynthetic pathway for UDP-N-acetylglucosamine (UDP-GlcNAc). The C-terminal domain catalyzes the transfer of acetyl group from acetyl coenzyme A to glucosamine-1-phosphate (GlcN-1-P) to produce N-acetylglucosamine-1-phosphate (GlcNAc-1-P), which is converted into UDP-GlcNAc by the transfer of uridine 5-monophosphate (from uridine 5-triphosphate), a reaction catalyzed by the N-terminal domain. In Streptomyces coelicolor (strain ATCC BAA-471 / A3(2) / M145), this protein is Bifunctional protein GlmU.